The primary structure comprises 141 residues: Large ribosomal subunit protein uL11 (141 aa).

The protein belongs to the universal ribosomal protein uL11 family. Part of the ribosomal stalk of the 50S ribosomal subunit. Interacts with L10 and the large rRNA to form the base of the stalk. L10 forms an elongated spine to which L12 dimers bind in a sequential fashion forming a multimeric L10(L12)X complex. Post-translationally, one or more lysine residues are methylated.

Forms part of the ribosomal stalk which helps the ribosome interact with GTP-bound translation factors. This chain is Large ribosomal subunit protein uL11, found in Clostridium acetobutylicum (strain ATCC 824 / DSM 792 / JCM 1419 / IAM 19013 / LMG 5710 / NBRC 13948 / NRRL B-527 / VKM B-1787 / 2291 / W).